Reading from the N-terminus, the 625-residue chain is MAGKKRESSLQIALSNQEQWEEALSTKGLQVVDVYQAWCGPCKPTVSLFRKIKNELGDDLLHFAVAESDTIDSLVKYRGKCEPTFLFLAGGELVAVVRGANGPLLQKTIIEQLAAEKKVLNQGSERHVIKDEVLLEEEDEIAPVQAQTEDEELVPSGKSYTVAIIKPDAVAHGKTDEIIMKIQESGFEILANEERTMTESEAREFYQHRAGEEKFQELIQFMSSGPCHILIISKSEEDEDVIPAWREFIGPTDVEIAKKEKPESLRAQYGTEVLYNAVHGSNDREQASRELAFFFPNFKISNESLKELTSVKPERTLALIRPEILKERKDEILQSIKDAGFSIAMQKEVMLTEHQVQEFYKEHINEDYYPALLKQMTSGPVLALALVKDNAVGHWRNMLGPASLSQALSEAPDSLRAQFAPSDSETNQLHGSSTTEEAKKEINFFFPVEHTLATIKPDALEEHRDEILEQIQGAGFTISQIKEANLNREMAEEFYKEHKGKPFFEQLVNYMCRGPCLMMILSKENAVHEWRSLMGPTDPAEAQKVLPDSLRGKFAKSILQNAVHGSSNSDHAMEKIKFIFGDIDLDRIVHESFGETPETSASDISRNAAAQGDDPEQDESKEMEE.

An NDK region spans residues 158–302; sequence KSYTVAIIKP…FFFPNFKISN (145 aa). Residues 594-625 are disordered; the sequence is GETPETSASDISRNAAAQGDDPEQDESKEMEE. A compositionally biased stretch (acidic residues) spans 613-625; that stretch reads DDPEQDESKEMEE.

It belongs to the NDK family. In terms of assembly, monomer and homodimer.

The protein resides in the cytoplasm. It localises to the cytoskeleton. The protein localises to the cilium axoneme. It is found in the dynein axonemal particle. Its function is as follows. May be a regulator of microtubule physiology. The chain is Thioredoxin domain-containing protein 6 from Xenopus laevis (African clawed frog).